Reading from the N-terminus, the 313-residue chain is tRNA pseudouridine synthase B (313 aa).

Asp48 functions as the Nucleophile in the catalytic mechanism.

The protein belongs to the pseudouridine synthase TruB family. Type 1 subfamily.

The catalysed reaction is uridine(55) in tRNA = pseudouridine(55) in tRNA. Its function is as follows. Responsible for synthesis of pseudouridine from uracil-55 in the psi GC loop of transfer RNAs. This is tRNA pseudouridine synthase B from Saccharophagus degradans (strain 2-40 / ATCC 43961 / DSM 17024).